A 217-amino-acid polypeptide reads, in one-letter code: Translation initiation factor IF-3 (217 aa).

The segment at 170 to 217 (KKTEAMAEARQAQEARKADAKANPGKSQNAAETDDAEAEAPAEAPAEA) is disordered. Over residues 172-189 (TEAMAEARQAQEARKADA) the composition is skewed to basic and acidic residues.

It belongs to the IF-3 family. In terms of assembly, monomer.

The protein localises to the cytoplasm. Its function is as follows. IF-3 binds to the 30S ribosomal subunit and shifts the equilibrium between 70S ribosomes and their 50S and 30S subunits in favor of the free subunits, thus enhancing the availability of 30S subunits on which protein synthesis initiation begins. The polypeptide is Translation initiation factor IF-3 (Streptomyces coelicolor (strain ATCC BAA-471 / A3(2) / M145)).